A 354-amino-acid chain; its full sequence is Galectin-9 (354 aa).

2 Galectin domains span residues 17–147 (FTGI…INFQ) and 226–354 (FFTS…HVQT). A beta-D-galactoside-binding positions include Asn47, His60, Arg64, Asn74, 81–87 (WGPEERK), His266, Arg270, Thr280, and 286–292 (WGPEERS).

In terms of tissue distribution, the isoform Long is expressed exclusively in the small intestine.

It localises to the cytoplasm. The protein localises to the nucleus. It is found in the secreted. Binds galactosides. Has high affinity for the Forssman pentasaccharide. Ligand for HAVCR2/TIM3. Binding to HAVCR2 induces T-helper type 1 lymphocyte (Th1) death. Also stimulates bactericidal activity in infected macrophages by causing macrophage activation and IL1B secretion which restricts intracellular bacterial growth. Ligand for P4HB; the interaction retains P4HB at the cell surface of Th2 T helper cells, increasing disulfide reductase activity at the plasma membrane, altering the plasma membrane redox state and enhancing cell migration. Ligand for CD44; the interaction enhances binding of SMAD3 to the FOXP3 promoter, leading to up-regulation of FOXP3 expression and increased induced regulatory T (iTreg) cell stability and suppressive function. Promotes ability of mesenchymal stromal cells to suppress T-cell proliferation. Expands regulatory T-cells and induces cytotoxic T-cell apoptosis following virus infection. Activates ERK1/2 phosphorylation inducing cytokine (IL-6, IL-8, IL-12) and chemokine (CCL2) production in mast and dendritic cells. Inhibits degranulation and induces apoptosis of mast cells. Induces maturation and migration of dendritic cells. Inhibits natural killer (NK) cell function. Can transform NK cell phenotype from peripheral to decidual during pregnancy. Astrocyte derived galectin-9 enhances microglial TNF production. May play a role in thymocyte-epithelial interactions relevant to the biology of the thymus. May provide the molecular basis for urate flux across cell membranes, allowing urate that is formed during purine metabolism to efflux from cells and serving as an electrogenic transporter that plays an important role in renal and gastrointestinal urate excretion. Highly selective to the anion urate. In Rattus norvegicus (Rat), this protein is Galectin-9 (Lgals9).